The primary structure comprises 339 residues: Ferredoxin--NADP reductase (339 aa).

The FAD site is built by Glu35, Gln43, Tyr48, Val88, Phe122, Asp287, and Ser327.

It belongs to the ferredoxin--NADP reductase type 2 family. As to quaternary structure, homodimer. It depends on FAD as a cofactor.

It carries out the reaction 2 reduced [2Fe-2S]-[ferredoxin] + NADP(+) + H(+) = 2 oxidized [2Fe-2S]-[ferredoxin] + NADPH. The polypeptide is Ferredoxin--NADP reductase (Leuconostoc citreum (strain KM20)).